Consider the following 277-residue polypeptide: Ribosomal protein L11 methyltransferase (277 aa).

Positions 130, 151, 172, and 213 each coordinate S-adenosyl-L-methionine.

The protein belongs to the methyltransferase superfamily. PrmA family.

The protein resides in the cytoplasm. The enzyme catalyses L-lysyl-[protein] + 3 S-adenosyl-L-methionine = N(6),N(6),N(6)-trimethyl-L-lysyl-[protein] + 3 S-adenosyl-L-homocysteine + 3 H(+). Its function is as follows. Methylates ribosomal protein L11. The polypeptide is Ribosomal protein L11 methyltransferase (Campylobacter concisus (strain 13826)).